A 286-amino-acid polypeptide reads, in one-letter code: Shikimate dehydrogenase (NADP(+)) (286 aa).

Shikimate is bound by residues 20–22 (SLS) and Ser67. The active-site Proton acceptor is the Lys71. Shikimate contacts are provided by Asn92 and Asp107. NADP(+) contacts are provided by residues 131–135 (GGGGA) and Ala230. Tyr232 is a binding site for shikimate. Gly253 contacts NADP(+).

The protein belongs to the shikimate dehydrogenase family. As to quaternary structure, homodimer.

The enzyme catalyses shikimate + NADP(+) = 3-dehydroshikimate + NADPH + H(+). It functions in the pathway metabolic intermediate biosynthesis; chorismate biosynthesis; chorismate from D-erythrose 4-phosphate and phosphoenolpyruvate: step 4/7. Functionally, involved in the biosynthesis of the chorismate, which leads to the biosynthesis of aromatic amino acids. Catalyzes the reversible NADPH linked reduction of 3-dehydroshikimate (DHSA) to yield shikimate (SA). The sequence is that of Shikimate dehydrogenase (NADP(+)) from Lactococcus lactis subsp. lactis (strain IL1403) (Streptococcus lactis).